A 464-amino-acid chain; its full sequence is Plant intracellular Ras-group-related LRR protein 3 (464 aa).

Positions 106–138 (AAVVSLEEVHEGYEKQLRDLEEEIGRVYASAVE) form a coiled coil. LRR repeat units lie at residues 160–183 (GGVV…LGKI), 184–206 (VGLV…ISGL), 207–230 (EKLE…GLLL), 232–252 (LRIL…IAQC), 254–275 (SLVE…FGYG), 276–299 (LLNL…ICEM), 301–322 (SLRY…IGRL), 323–347 (TNLE…ISDL), 348–370 (ANLR…FFRL), and 372–393 (KLEK…MVNQ). Residues 398–406 (VREFMRKRW) carry the GVYW; degenerate motif.

This sequence belongs to the SHOC2 family. Widely expressed.

Leucine-rich repeat protein that likely mediates protein interactions, possibly in the context of signal transduction. The polypeptide is Plant intracellular Ras-group-related LRR protein 3 (PIRL3) (Arabidopsis thaliana (Mouse-ear cress)).